The primary structure comprises 211 residues: Peptidyl-prolyl cis-trans isomerase FKBP14 (211 aa).

The first 19 residues, 1-19, serve as a signal peptide directing secretion; the sequence is MRFFLWNAILALWVTVLSG. Cys38 and Cys96 form a disulfide bridge. Residues 45–135 enclose the PPIase FKBP-type domain; sequence GDLMLVHYEG…IFNIDLLEIR (91 aa). One can recognise an EF-hand 1 domain in the interval 135–170; it reads RNGPRSHESFQEMDLNDDWRLSKHEVKVYLQKEFEK. Ca(2+)-binding residues include Asp148, Asn150, Asp152, Arg154, and Glu159. An N-linked (GlcNAc...) asparagine glycan is attached at Asn176. The 33-residue stretch at 179–211 folds into the EF-hand 2 domain; sequence HHDALVEDIFDKEDEDKDGFISAREFTYVHDEL. Positions 192, 194, 196, and 203 each coordinate Ca(2+). A Prevents secretion from ER motif is present at residues 208-211; it reads HDEL.

As to quaternary structure, monomer. Homodimer. Interacts with type III, type IV and type X collagens.

The protein resides in the endoplasmic reticulum lumen. It carries out the reaction [protein]-peptidylproline (omega=180) = [protein]-peptidylproline (omega=0). With respect to regulation, inhibited by tacrolimus/FK506. In terms of biological role, PPIase which accelerates the folding of proteins during protein synthesis. Has a preference for substrates containing 4-hydroxylproline modifications, including type III collagen. May also target type VI and type X collagens. The chain is Peptidyl-prolyl cis-trans isomerase FKBP14 (Fkbp14) from Mus musculus (Mouse).